Reading from the N-terminus, the 510-residue chain is Serine/threonine protein phosphatase 2A 57 kDa regulatory subunit B' kappa isoform (510 aa).

The disordered stretch occupies residues Met1–Ser51. Residues Gly25–Ser51 show a composition bias toward polar residues. Thr476 and Thr493 each carry phosphothreonine. Phosphoserine is present on Ser502. Thr508 bears the Phosphothreonine mark.

Belongs to the phosphatase 2A regulatory subunit B56 family. PP2A consists of a common heteromeric enzyme, composed of a catalytic subunit (subunits C), a constant regulatory subunit (subunit A), and a variety of regulatory subunits such as subunits B (the R2/B/PR55/B55, R3/B''/PR72/PR130/PR59 and R5/B'/B56 families). Interacts with SIT1. Post-translationally, phosphorylated at Thr-476, Thr-493, Ser-502 and Thr-508 by SIT1. In terms of tissue distribution, expressed in root stele and epidermal cells.

The protein localises to the cytoplasm. The protein resides in the cytosol. It is found in the cell membrane. B regulatory subunit of phosphatase 2A (PP2A) involved in salt stress response. Under salt stress conditions, required for the catalytic activity of PP2A and the dephosphorylation of SIT1, a negative regulator of salt tolerance. Dephosphorylation of SIT1 turns off salt-induced SIT1 activity directly, which has a positive effect on salt tolerance. This is Serine/threonine protein phosphatase 2A 57 kDa regulatory subunit B' kappa isoform from Oryza sativa subsp. japonica (Rice).